The chain runs to 426 residues: Eukaryotic translation initiation factor 3 subunit M (426 aa).

One can recognise a PCI domain in the interval Asp179–Tyr350. Residues Asp385–Leu401 are compositionally biased toward basic and acidic residues. Positions Asp385–Asp426 are disordered.

The protein belongs to the eIF-3 subunit M family. In terms of assembly, component of the eukaryotic translation initiation factor 3 (eIF-3) complex.

The protein resides in the cytoplasm. Its function is as follows. Component of the eukaryotic translation initiation factor 3 (eIF-3) complex, which is involved in protein synthesis of a specialized repertoire of mRNAs and, together with other initiation factors, stimulates binding of mRNA and methionyl-tRNAi to the 40S ribosome. The eIF-3 complex specifically targets and initiates translation of a subset of mRNAs involved in cell proliferation. This chain is Eukaryotic translation initiation factor 3 subunit M, found in Chaetomium globosum (strain ATCC 6205 / CBS 148.51 / DSM 1962 / NBRC 6347 / NRRL 1970) (Soil fungus).